The sequence spans 105 residues: Large ribosomal subunit protein bL21 (105 aa).

This sequence belongs to the bacterial ribosomal protein bL21 family. As to quaternary structure, part of the 50S ribosomal subunit. Contacts protein L20.

In terms of biological role, this protein binds to 23S rRNA in the presence of protein L20. The sequence is that of Large ribosomal subunit protein bL21 from Thermotoga maritima (strain ATCC 43589 / DSM 3109 / JCM 10099 / NBRC 100826 / MSB8).